Here is a 348-residue protein sequence, read N- to C-terminus: Papaya proteinase 4 (348 aa).

The first 18 residues, 1 to 18, serve as a signal peptide directing secretion; it reads MAIICSFSKLLFVAICLF. The propeptide at 19–132 is activation peptide; it reads GHMSLSYCDF…EEFVNEDIVD (114 aa). Cystine bridges form between cysteine 154–cysteine 195, cysteine 188–cysteine 227, and cysteine 285–cysteine 336. Cysteine 157 is a catalytic residue. Active-site residues include histidine 291 and asparagine 311.

This sequence belongs to the peptidase C1 family.

It catalyses the reaction Preferential cleavage: Gly-|-Xaa, in proteins and in small molecule substrates.. Not inhibited by cystatin. In terms of biological role, thiol protease with a substrate specificity very different from the other thiol proteases. This is Papaya proteinase 4 from Carica papaya (Papaya).